Reading from the N-terminus, the 285-residue chain is Short chain dehydrogenase sol3 (285 aa).

Leu-39, Lys-64, and Asp-87 together coordinate NADP(+). Residues Ser-168 and Tyr-200 each act as proton donor in the active site. 3 residues coordinate NADP(+): Tyr-200, Lys-204, and Ser-234. The active-site Lowers pKa of active site Tyr is the Lys-204.

It belongs to the short-chain dehydrogenases/reductases (SDR) family.

It participates in phytotoxin biosynthesis. Functionally, short chain dehydrogenase; part of the gene cluster that mediates the biosynthesis of the phytotoxin solanapyrone, a causal agent of early blight disease of potato and tomato. The prosolanapyrone synthase sol1 is a polyketide synthase that produces the octaketide desmethylprosolanapyrone I via sequential condensations of 7 malonyl-CoA units with one acetyl-CoA unit, and one methylation step. The octaketide backbone is further methylated by the sol2 O-methyltransferase to yield prosolanapyrone I. Prosolanapyrone I is hydroxylated to prosolanapyrone II by the cytochrome P450 monooxygenase sol6. The solanapyrone synthase sol5 then catalyzes the oxidation of prosolanapyrone II and the subsequent Diels Alder cycloisomerization of the product prosolanapyrone III to solanapyrones A and D. Solanapyrones A and D are then converted into solanapyrones B and E, respectively, by the sol3 dehydrogenase. This Alternaria solani protein is Short chain dehydrogenase sol3 (sol3).